Reading from the N-terminus, the 215-residue chain is Oligoribonuclease (215 aa).

An Exonuclease domain is found at 5–170; sequence LVWIDCEMTG…ADIHESIREL (166 aa). Residue Y127 is part of the active site. Positions 196 to 215 are disordered; sequence LGPPGKDAADTDSAAGHTTG.

Belongs to the oligoribonuclease family.

It is found in the cytoplasm. Its function is as follows. 3'-to-5' exoribonuclease specific for small oligoribonucleotides. The chain is Oligoribonuclease from Mycobacterium sp. (strain JLS).